Reading from the N-terminus, the 217-residue chain is uncharacterized protein (217 aa).

One can recognise an ABC transporter domain in the interval 2 to 216; sequence LCVKNVSLRL…AQWSENYNKL (215 aa). 34 to 41 is an ATP binding site; the sequence is GPSGCGKS.

It belongs to the ABC transporter superfamily.

Probably part of a binding-protein-dependent transport system YnjCD. Probably responsible for energy coupling to the transport system. This is an uncharacterized protein from Escherichia coli (strain K12).